A 194-amino-acid polypeptide reads, in one-letter code: Phosphoheptose isomerase (194 aa).

The region spanning 37 to 194 is the SIS domain; sequence ISNSFKQGGK…LIEFEMAKQA (158 aa). 52–54 lines the substrate pocket; it reads NGG. Zn(2+) contacts are provided by H61 and E65. Residues E65, 93–94, 119–121, S124, and Q172 contribute to the substrate site; these read ND and STS. Q172 and H180 together coordinate Zn(2+).

The protein belongs to the SIS family. GmhA subfamily. Homotetramer. Requires Zn(2+) as cofactor.

Its subcellular location is the cytoplasm. The catalysed reaction is 2 D-sedoheptulose 7-phosphate = D-glycero-alpha-D-manno-heptose 7-phosphate + D-glycero-beta-D-manno-heptose 7-phosphate. Its pathway is carbohydrate biosynthesis; D-glycero-D-manno-heptose 7-phosphate biosynthesis; D-glycero-alpha-D-manno-heptose 7-phosphate and D-glycero-beta-D-manno-heptose 7-phosphate from sedoheptulose 7-phosphate: step 1/1. Its function is as follows. Catalyzes the isomerization of sedoheptulose 7-phosphate in D-glycero-D-manno-heptose 7-phosphate. The chain is Phosphoheptose isomerase from Haemophilus influenzae (strain PittGG).